A 213-amino-acid chain; its full sequence is Small ribosomal subunit protein uS3 (213 aa).

Positions 38 to 106 (IRAFVKKLLY…EFSLEVNEIR (69 aa)) constitute a KH type-2 domain.

Belongs to the universal ribosomal protein uS3 family. Part of the 30S ribosomal subunit. Forms a tight complex with proteins S10 and S14.

Its function is as follows. Binds the lower part of the 30S subunit head. Binds mRNA in the 70S ribosome, positioning it for translation. This is Small ribosomal subunit protein uS3 from Desulfovibrio desulfuricans (strain ATCC 27774 / DSM 6949 / MB).